The chain runs to 127 residues: Glycine cleavage system H protein (127 aa).

In terms of domain architecture, Lipoyl-binding spans 22-104; the sequence is KVRIGITDFA…YEKAWMIVVE (83 aa). Lys63 is modified (N6-lipoyllysine).

It belongs to the GcvH family. The glycine cleavage system is composed of four proteins: P, T, L and H. (R)-lipoate is required as a cofactor.

The glycine cleavage system catalyzes the degradation of glycine. The H protein shuttles the methylamine group of glycine from the P protein to the T protein. In terms of biological role, is also involved in protein lipoylation via its role as an octanoyl/lipoyl carrier protein intermediate. This chain is Glycine cleavage system H protein, found in Geobacillus sp. (strain WCH70).